The sequence spans 468 residues: MNPSSSPSQSTANVKFVLLISGVAALGGFLFGFDTAVINGAVAALQKHFQTDSLLTGLSVSLALLGSALGAFGAGPIADRHGRIKTMILAAVLFTLSSIGSGLPFTIWDFIFWRVLGGIGVGAASVIAPAYIAEVSPAHLRGRLGSLQQLAIVSGIFIALLSNWFIALMAGGSAQNPWLFGAAAWRWMFWTELIPALLYGVCAFLIPESPRYLVAQGQGEKAAAILWKVEGGDVPSRIEEIQATVSLDHKPRFSDLLSRRGGLLPIVWIGMGLSALQQFVGINVIFYYSSVLWRSVGFTEEKSLLITVITGFINILTTLVAIAFVDKFGRKPLLLMGSIGMTITLGILSVVFGGATVVNGQPTLTGAAGIIALVTANLYVFSFGFSWGPIVWVLLGEMFNNKIRAAALSVAAGVQWIANFIISTTFPPLLDTVGLGPAYGLYATSAAISIFFIWFFVKETKGKTLEQM.

Residues 1–17 (MNPSSSPSQSTANVKFV) lie on the Cytoplasmic side of the membrane. A helical transmembrane segment spans residues 18-38 (LLISGVAALGGFLFGFDTAVI). The Extracellular segment spans residues 39 to 58 (NGAVAALQKHFQTDSLLTGL). Residues 59–78 (SVSLALLGSALGAFGAGPIA) form a helical membrane-spanning segment. Residues 79–84 (DRHGRI) are Cytoplasmic-facing. The chain crosses the membrane as a helical span at residues 85–105 (KTMILAAVLFTLSSIGSGLPF). Topologically, residues 106-114 (TIWDFIFWR) are extracellular. Residues 115–135 (VLGGIGVGAASVIAPAYIAEV) traverse the membrane as a helical segment. Topologically, residues 136–149 (SPAHLRGRLGSLQQ) are cytoplasmic. A helical transmembrane segment spans residues 150–170 (LAIVSGIFIALLSNWFIALMA). Over 171–186 (GGSAQNPWLFGAAAWR) the chain is Extracellular. The helical transmembrane segment at 187 to 207 (WMFWTELIPALLYGVCAFLIP) threads the bilayer. The Cytoplasmic segment spans residues 208–265 (ESPRYLVAQGQGEKAAAILWKVEGGDVPSRIEEIQATVSLDHKPRFSDLLSRRGGLLP). Residues 266-286 (IVWIGMGLSALQQFVGINVIF) form a helical membrane-spanning segment. The Extracellular portion of the chain corresponds to 287–307 (YYSSVLWRSVGFTEEKSLLIT). The helical transmembrane segment at 308–328 (VITGFINILTTLVAIAFVDKF) threads the bilayer. Over 329 to 331 (GRK) the chain is Cytoplasmic. The helical transmembrane segment at 332 to 352 (PLLLMGSIGMTITLGILSVVF) threads the bilayer. Topologically, residues 353 to 366 (GGATVVNGQPTLTG) are extracellular. A helical membrane pass occupies residues 367–387 (AAGIIALVTANLYVFSFGFSW). The Cytoplasmic portion of the chain corresponds to 388 to 412 (GPIVWVLLGEMFNNKIRAAALSVAA). Residues 413-433 (GVQWIANFIISTTFPPLLDTV) traverse the membrane as a helical segment. The Extracellular segment spans residues 434–436 (GLG). The helical transmembrane segment at 437–457 (PAYGLYATSAAISIFFIWFFV) threads the bilayer. At 458 to 468 (KETKGKTLEQM) the chain is on the cytoplasmic side.

It belongs to the major facilitator superfamily. Sugar transporter (TC 2.A.1.1) family.

The protein resides in the cell membrane. The protein is Glucose transport protein (gtr) of Synechocystis sp. (strain ATCC 27184 / PCC 6803 / Kazusa).